The sequence spans 151 residues: Protein ECM12 (151 aa).

N-linked (GlcNAc...) asparagine glycosylation occurs at Asn-2. 2 consecutive transmembrane segments (helical) span residues 17 to 37 (LLVF…IFFF) and 51 to 71 (AFLA…VGFF). 2 N-linked (GlcNAc...) asparagine glycosylation sites follow: Asn-132 and Asn-137.

The protein localises to the membrane. May be involved in cell wall organization and biogenesis. This Saccharomyces cerevisiae (strain ATCC 204508 / S288c) (Baker's yeast) protein is Protein ECM12 (ECM12).